Reading from the N-terminus, the 269-residue chain is Sulfur carrier protein FdhD (269 aa).

Cysteine 111 functions as the Cysteine persulfide intermediate in the catalytic mechanism.

This sequence belongs to the FdhD family.

It localises to the cytoplasm. Required for formate dehydrogenase (FDH) activity. Acts as a sulfur carrier protein that transfers sulfur from IscS to the molybdenum cofactor prior to its insertion into FDH. The protein is Sulfur carrier protein FdhD of Brucella abortus biovar 1 (strain 9-941).